Consider the following 457-residue polypeptide: ERV-H1 provirus ancestral Env polyprotein (457 aa).

Residues 1–35 form the signal peptide; the sequence is MIFAGKAPSNTSTLMKFYSLILYSLLFSFPFLCHP. Residues asparagine 10 and asparagine 47 are each glycosylated (N-linked (GlcNAc...) asparagine). A CXXC motif is present at residues 64–67; it reads CWLC. Residues asparagine 197, asparagine 222, asparagine 265, asparagine 283, asparagine 352, and asparagine 370 are each glycosylated (N-linked (GlcNAc...) asparagine). The interval 388-408 is fusion peptide; that stretch reads VIPLIPLMFGLGLSASTIALS.

Belongs to the gamma type-C retroviral envelope protein family. HERV class-I H env subfamily. As to quaternary structure, the surface (SU) and transmembrane (TM) proteins form a heterodimer. SU and TM are attached by noncovalent interactions or by a labile interchain disulfide bond. Specific enzymatic cleavages in vivo yield the mature SU and TM proteins. Post-translationally, the CXXC motif is highly conserved across a broad range of retroviral envelope proteins. It is thought to participate in the formation of a labile disulfide bond possibly with the CX6CC motif present in the transmembrane protein.

It localises to the virion. Functionally, retroviral envelope proteins mediate receptor recognition and membrane fusion during early infection. Endogenous envelope proteins may have kept, lost or modified their original function during evolution. In terms of biological role, SU mediates receptor recognition. TM anchors the envelope heterodimer to the viral membrane through one transmembrane domain. The other hydrophobic domain, called fusion peptide, mediates fusion of the viral membrane with the target cell membrane. The sequence is that of ERV-H1 provirus ancestral Env polyprotein from Pan troglodytes (Chimpanzee).